A 140-amino-acid polypeptide reads, in one-letter code: Hemoglobin subunit beta (140 aa).

The Globin domain maps to 1–140 (GGSDVSAFLA…VGEALAKGYH (140 aa)). The heme b site is built by His57 and His86.

Belongs to the globin family. In terms of assembly, heterotetramer of either two alpha-B chains or two alpha-C chains and two beta chains.

The beta chain is a component of adult hemoglobins B. And C. The sequence is that of Hemoglobin subunit beta (HBB) from Aquarana catesbeiana (American bullfrog).